The sequence spans 282 residues: Putative 4-diphosphocytidyl-2-C-methyl-D-erythritol kinase (282 aa).

Lysine 10 is an active-site residue. Position 94–104 (94–104 (PICAGLGGGSS)) interacts with ATP. Residue aspartate 136 is part of the active site.

This sequence belongs to the GHMP kinase family. IspE subfamily.

The enzyme catalyses 4-CDP-2-C-methyl-D-erythritol + ATP = 4-CDP-2-C-methyl-D-erythritol 2-phosphate + ADP + H(+). Functionally, catalyzes the phosphorylation of the position 2 hydroxy group of 4-diphosphocytidyl-2C-methyl-D-erythritol. This chain is Putative 4-diphosphocytidyl-2-C-methyl-D-erythritol kinase (ipk), found in Streptococcus mutans serotype c (strain ATCC 700610 / UA159).